The following is a 400-amino-acid chain: Carnosine N-methyltransferase (400 aa).

A disordered region spans residues 1 to 51 (MQRRQRAPPASQPAQDGGRSEDVEVQFSAGRLGSAAPAGPPARGTAEDEER). The span at 28–44 (SAGRLGSAAPAGPPARG) shows a compositional bias: low complexity. S-adenosyl-L-methionine is bound by residues Q155, R158, G199, E220, D286, F287, and C303. Carnosine is bound at residue D307. Y315 is an S-adenosyl-L-methionine binding site. Carnosine contacts are provided by H338 and Y389.

The protein belongs to the carnosine N-methyltransferase family. As to quaternary structure, homodimer. Each monomer accommodates one molecule of carnosine in its active pocket, precisely anchoring the histidine imidazole ring such that only N1 is exposed and deprotonated for methylation.

The protein resides in the cytoplasm. It is found in the cytosol. The protein localises to the nucleus. It carries out the reaction carnosine + S-adenosyl-L-methionine = anserine + S-adenosyl-L-homocysteine + H(+). N-methyltransferase that catalyzes the formation of anserine (beta-alanyl-N(Pi)-methyl-L-histidine) from carnosine. Anserine, a methylated derivative of carnosine (beta-alanyl-L-histidine), is an abundant constituent of vertebrate skeletal muscles. Also methylates other L-histidine-containing di- and tripeptides such as Gly-Gly-His, Gly-His and homocarnosine (GABA-His). The protein is Carnosine N-methyltransferase of Mus musculus (Mouse).